The primary structure comprises 177 residues: Acireductone dioxygenase (177 aa).

Residues His-99, His-101, Glu-105, and His-143 each contribute to the Fe(2+) site. Ni(2+) is bound by residues His-99, His-101, Glu-105, and His-143.

The protein belongs to the acireductone dioxygenase (ARD) family. As to quaternary structure, monomer. Fe(2+) serves as cofactor. Requires Ni(2+) as cofactor.

The catalysed reaction is 1,2-dihydroxy-5-(methylsulfanyl)pent-1-en-3-one + O2 = 3-(methylsulfanyl)propanoate + CO + formate + 2 H(+). It carries out the reaction 1,2-dihydroxy-5-(methylsulfanyl)pent-1-en-3-one + O2 = 4-methylsulfanyl-2-oxobutanoate + formate + 2 H(+). It functions in the pathway amino-acid biosynthesis; L-methionine biosynthesis via salvage pathway; L-methionine from S-methyl-5-thio-alpha-D-ribose 1-phosphate: step 5/6. Functionally, catalyzes 2 different reactions between oxygen and the acireductone 1,2-dihydroxy-3-keto-5-methylthiopentene (DHK-MTPene) depending upon the metal bound in the active site. Fe-containing acireductone dioxygenase (Fe-ARD) produces formate and 2-keto-4-methylthiobutyrate (KMTB), the alpha-ketoacid precursor of methionine in the methionine recycle pathway. Ni-containing acireductone dioxygenase (Ni-ARD) produces methylthiopropionate, carbon monoxide and formate, and does not lie on the methionine recycle pathway. This is Acireductone dioxygenase from Leptospira interrogans serogroup Icterohaemorrhagiae serovar copenhageni (strain Fiocruz L1-130).